A 327-amino-acid polypeptide reads, in one-letter code: Lipoyl synthase (327 aa).

Residues C75, C80, C86, C101, C105, C108, and S315 each contribute to the [4Fe-4S] cluster site. Residues 87 to 304 form the Radical SAM core domain; sequence FGNGTATFMI…EEEAYKMGFS (218 aa).

Belongs to the radical SAM superfamily. Lipoyl synthase family. It depends on [4Fe-4S] cluster as a cofactor.

The protein localises to the cytoplasm. The enzyme catalyses [[Fe-S] cluster scaffold protein carrying a second [4Fe-4S](2+) cluster] + N(6)-octanoyl-L-lysyl-[protein] + 2 oxidized [2Fe-2S]-[ferredoxin] + 2 S-adenosyl-L-methionine + 4 H(+) = [[Fe-S] cluster scaffold protein] + N(6)-[(R)-dihydrolipoyl]-L-lysyl-[protein] + 4 Fe(3+) + 2 hydrogen sulfide + 2 5'-deoxyadenosine + 2 L-methionine + 2 reduced [2Fe-2S]-[ferredoxin]. Its pathway is protein modification; protein lipoylation via endogenous pathway; protein N(6)-(lipoyl)lysine from octanoyl-[acyl-carrier-protein]: step 2/2. In terms of biological role, catalyzes the radical-mediated insertion of two sulfur atoms into the C-6 and C-8 positions of the octanoyl moiety bound to the lipoyl domains of lipoate-dependent enzymes, thereby converting the octanoylated domains into lipoylated derivatives. The polypeptide is Lipoyl synthase (Variovorax paradoxus (strain S110)).